Here is a 715-residue protein sequence, read N- to C-terminus: Polyphosphate kinase (715 aa).

Position 60 (N60) interacts with ATP. The Mg(2+) site is built by R380 and R410. The Phosphohistidine intermediate role is filled by H440. Positions 473, 569, and 597 each coordinate ATP.

The protein belongs to the polyphosphate kinase 1 (PPK1) family. It depends on Mg(2+) as a cofactor. An intermediate of this reaction is the autophosphorylated ppk in which a phosphate is covalently linked to a histidine residue through a N-P bond.

It carries out the reaction [phosphate](n) + ATP = [phosphate](n+1) + ADP. Functionally, catalyzes the reversible transfer of the terminal phosphate of ATP to form a long-chain polyphosphate (polyP). The protein is Polyphosphate kinase of Erythrobacter litoralis (strain HTCC2594).